The sequence spans 283 residues: Tetraspanin-33 (283 aa).

Residues 1–24 are Cytoplasmic-facing; sequence MARRPRAPAASGEEFSFVSPLVKY. Residues 25 to 45 form a helical membrane-spanning segment; it reads LLFFFNMLFWVISMVMVAVGV. Topologically, residues 46–64 are extracellular; sequence YARLMKHAEAALACLAVDP. The chain crosses the membrane as a helical span at residues 65 to 85; the sequence is AILLIVVGVLMFLLTFCGCIG. The Cytoplasmic portion of the chain corresponds to 86-96; the sequence is SLRENICLLQT. Residues 97–117 traverse the membrane as a helical segment; the sequence is FSLCLTAVFLLQLAAGILGFV. The Extracellular segment spans residues 118–235; sequence FSDKARGKVS…DKLVNWIHSN (118 aa). Disulfide bonds link Cys-156/Cys-224, Cys-157/Cys-189, Cys-173/Cys-183, and Cys-190/Cys-203. A glycan (N-linked (GlcNAc...) asparagine) is linked at Asn-172. A helical transmembrane segment spans residues 236–256; it reads LFLLGGVALGLAIPQLVGILL. Over 257-283 the chain is Cytoplasmic; that stretch reads SQILVNQIKDQIKLQLYNQQHRADPWY.

Belongs to the tetraspanin (TM4SF) family. As to quaternary structure, homodimer; disulfide-linked. Interacts (via extracellular domain) with ADAM10 (via extracellular domain). Interacts (via cytoplasmic domain) with PLEKHA7 (via WW domains); the interaction is dependent on PDZD11 being bound to PLEKHA7 and facilitates the docking of ADAM10 to zonula adherens. Predominantly expressed in erythroblasts.

Its subcellular location is the cell membrane. It is found in the cell junction. The protein localises to the adherens junction. The protein resides in the cytoplasm. Part of TspanC8 subgroup, composed of 6 members that interact with the transmembrane metalloprotease ADAM10. This interaction is required for ADAM10 exit from the endoplasmic reticulum and for enzymatic maturation and trafficking to the cell surface as well as substrate specificity. Different TspanC8/ADAM10 complexes have distinct substrates. Plays an important role in normal erythropoiesis. It has a role in the differentiation of erythroid progenitors. Negatively regulates ligand-induced Notch activity probably by regulating ADAM10 activity. Mediates docking of ADAM10 to zonula adherens by interacting with ADAM10 and, in a PDZD11-dependent manner, with the zonula adherens protein PLEKHA7. This chain is Tetraspanin-33, found in Homo sapiens (Human).